We begin with the raw amino-acid sequence, 65 residues long: MKRPVVNCPQCGKSVAWDNSNPFRPFCSERCKLIDLGQWATESYRIPDTGKDSEKQENDPSGSEK.

Residues Cys8, Cys11, Cys27, and Cys31 each contribute to the Zn(2+) site. A disordered region spans residues 43 to 65 (SYRIPDTGKDSEKQENDPSGSEK). A compositionally biased stretch (basic and acidic residues) spans 48-65 (DTGKDSEKQENDPSGSEK).

It belongs to the DNA gyrase inhibitor YacG family. Interacts with GyrB. The cofactor is Zn(2+).

In terms of biological role, inhibits all the catalytic activities of DNA gyrase by preventing its interaction with DNA. Acts by binding directly to the C-terminal domain of GyrB, which probably disrupts DNA binding by the gyrase. The protein is DNA gyrase inhibitor YacG of Nitrosospira multiformis (strain ATCC 25196 / NCIMB 11849 / C 71).